Reading from the N-terminus, the 306-residue chain is Pantothenate kinase (306 aa).

Gly91 to Ser98 is a binding site for ATP.

This sequence belongs to the prokaryotic pantothenate kinase family.

The protein resides in the cytoplasm. It catalyses the reaction (R)-pantothenate + ATP = (R)-4'-phosphopantothenate + ADP + H(+). The protein operates within cofactor biosynthesis; coenzyme A biosynthesis; CoA from (R)-pantothenate: step 1/5. The protein is Pantothenate kinase (coaA) of Streptococcus pneumoniae serotype 4 (strain ATCC BAA-334 / TIGR4).